Here is a 69-residue protein sequence, read N- to C-terminus: Cap-specific mRNA (nucleoside-2'-O-)-methyltransferase (69 aa).

Residue Y22 participates in mRNA binding. Q39, Y66, and G68 together coordinate S-adenosyl-L-methionine.

The protein belongs to the class I-like SAM-binding methyltransferase superfamily. Poxvirus/kinetoplastid 2'-O-MTase family. Interacts with poly(A) polymerase catalytic subunit OPG063. Interacts with OPG109 and OPG123; these interactions might help linking transcription to capping and polyadenylation.

Its subcellular location is the virion. It carries out the reaction a 5'-end (N(7)-methyl 5'-triphosphoguanosine)-ribonucleoside in mRNA + S-adenosyl-L-methionine = a 5'-end (N(7)-methyl 5'-triphosphoguanosine)-(2'-O-methyl-ribonucleoside) in mRNA + S-adenosyl-L-homocysteine + H(+). Functionally, displays methyltransferase, positive regulation of the poly(A) polymerase and transcription elongation activities. Involved in the modification of both mRNA ends and in intermediate and late gene positive transcription elongation. At the mRNAs 5' end, methylates the ribose 2' OH group of the first transcribed nucleotide, thereby producing a 2'-O-methylpurine cap. At the 3' end, functions as a processivity factor which stimulates the activity of the viral poly(A) polymerase OPG063 that creates mRNA's poly(A) tail. In the presence of OPG102, OPG063 does not dissociate from the RNA allowing tail elongation to around 250 adenylates. The protein is Cap-specific mRNA (nucleoside-2'-O-)-methyltransferase (OPG102) of Sus scrofa (Pig).